A 144-amino-acid chain; its full sequence is 3-hydroxyacyl-[acyl-carrier-protein] dehydratase FabZ (144 aa).

Histidine 48 is an active-site residue.

The protein belongs to the thioester dehydratase family. FabZ subfamily.

The protein localises to the cytoplasm. It catalyses the reaction a (3R)-hydroxyacyl-[ACP] = a (2E)-enoyl-[ACP] + H2O. Its function is as follows. Involved in unsaturated fatty acids biosynthesis. Catalyzes the dehydration of short chain beta-hydroxyacyl-ACPs and long chain saturated and unsaturated beta-hydroxyacyl-ACPs. The sequence is that of 3-hydroxyacyl-[acyl-carrier-protein] dehydratase FabZ from Bacillus thuringiensis (strain Al Hakam).